We begin with the raw amino-acid sequence, 610 residues long: Elongation factor 4 (610 aa).

In terms of domain architecture, tr-type G spans 13 to 195 (SHIRNFSIVA…AIVNRLPAPK (183 aa)). Residues 25–30 (DHGKST) and 142–145 (NKID) each bind GTP.

The protein belongs to the TRAFAC class translation factor GTPase superfamily. Classic translation factor GTPase family. LepA subfamily.

It localises to the cell inner membrane. It carries out the reaction GTP + H2O = GDP + phosphate + H(+). Required for accurate and efficient protein synthesis under certain stress conditions. May act as a fidelity factor of the translation reaction, by catalyzing a one-codon backward translocation of tRNAs on improperly translocated ribosomes. Back-translocation proceeds from a post-translocation (POST) complex to a pre-translocation (PRE) complex, thus giving elongation factor G a second chance to translocate the tRNAs correctly. Binds to ribosomes in a GTP-dependent manner. In Rhizobium leguminosarum bv. trifolii (strain WSM2304), this protein is Elongation factor 4.